The sequence spans 706 residues: Transmembrane 9 superfamily member 3 (706 aa).

The signal sequence occupies residues 1-33; sequence MRVRPKRSVITLMAIVVVMLILRNQFYSSRTRG. Residues 34–290 are Lumenal-facing; it reads HGQEPVISSS…LSDEQSIQFH (257 aa). A helical membrane pass occupies residues 291 to 311; that stretch reads WMSLANSVGIVLSISFITLII. Topologically, residues 312–371 are cytoplasmic; it reads YVRVMYTDKSNSKSPKYMINIEGIETEDDLDDDKYGKYSVYTVAKDWIQNGRPNLFGLKV. Residues 372–392 form a helical membrane-spanning segment; that stretch reads LILLVSFGVQFLFTIIGSLTI. Topologically, residues 393–405 are lumenal; it reads SCSMNKLHNVRNS. Residues 406-426 traverse the membrane as a helical segment; that stretch reads VLTMAILFFVLGAFMASFVGT. The Cytoplasmic portion of the chain corresponds to 427–456; it reads RLSMVTKTKRTKANYLDDNRYLKDYKKFSP. Residues 457–477 traverse the membrane as a helical segment; that stretch reads IFTILCGSSLPGIVMVSTFLL. Topologically, residues 478-494 are lumenal; it reads NSIVWAHDSTSALPFKT. A helical membrane pass occupies residues 495–515; it reads IVFFMSIYFIVCIPLSLFGGI. Residues 516-553 lie on the Cytoplasmic side of the membrane; it reads VANNIPLPQYWLSGITKDESNSDGNGLFVPKSRAKFNP. Residues 554-574 form a helical membrane-spanning segment; the sequence is LVYCGIYLCGIFPLLVIYVEM. Residues 575-592 are Lumenal-facing; sequence QYVYKSLWLEKTTFYYFY. The chain crosses the membrane as a helical span at residues 593-613; that stretch reads GFLFLSIILLCVLTMEISIIG. Residues 614-637 lie on the Cytoplasmic side of the membrane; it reads SYLLMRFCFEDKVVRNNWRWKCFE. Residues 638–658 traverse the membrane as a helical segment; it reads MGFSGGVYMELYSLYYIFAVL. Topologically, residues 659-665 are lumenal; it reads NIHGFSS. The helical transmembrane segment at 666 to 686 threads the bilayer; that stretch reads ILISICYSLIFNVMCSLGLGA. Over 687–706 the chain is Cytoplasmic; that stretch reads LSYLTASWFINKIYHQKVNL.

Belongs to the nonaspanin (TM9SF) (TC 9.A.2) family.

The protein localises to the golgi apparatus membrane. With EMP70 and TMN2, plays a critical role in the late stages of a nutrient-controlled pathway notably regulating FLO11 gene expression. Acts downstream of RAS2 and TOR. Essential for cell adhesion and filamentous growth. May play a role as effector of cellular copper homeostasis. The protein is Transmembrane 9 superfamily member 3 (TMN3) of Saccharomyces cerevisiae (strain ATCC 204508 / S288c) (Baker's yeast).